Reading from the N-terminus, the 426-residue chain is Glutamate-1-semialdehyde 2,1-aminomutase (426 aa).

N6-(pyridoxal phosphate)lysine is present on Lys-265.

Belongs to the class-III pyridoxal-phosphate-dependent aminotransferase family. HemL subfamily. Homodimer. Requires pyridoxal 5'-phosphate as cofactor.

The protein resides in the cytoplasm. It carries out the reaction (S)-4-amino-5-oxopentanoate = 5-aminolevulinate. The protein operates within porphyrin-containing compound metabolism; protoporphyrin-IX biosynthesis; 5-aminolevulinate from L-glutamyl-tRNA(Glu): step 2/2. This is Glutamate-1-semialdehyde 2,1-aminomutase from Salmonella heidelberg (strain SL476).